The primary structure comprises 215 residues: E3 ubiquitin-protein ligase znrf1 (215 aa).

Disordered regions lie at residues 1–39 (MGGK…PGGT) and 66–96 (YTPR…ETGG). Glycine 2 is lipidated: N-myristoyl glycine. Residues 172 to 213 (CVICLEELQQGDTIARLPCLCIYHKSCIDSWFEINRSCPEHP) form an RING-type; atypical zinc finger.

Its subcellular location is the endosome. It localises to the lysosome. It is found in the membrane. It catalyses the reaction S-ubiquitinyl-[E2 ubiquitin-conjugating enzyme]-L-cysteine + [acceptor protein]-L-lysine = [E2 ubiquitin-conjugating enzyme]-L-cysteine + N(6)-ubiquitinyl-[acceptor protein]-L-lysine.. Its pathway is protein modification; protein ubiquitination. E3 ubiquitin-protein ligase that plays a role in neuron cells differentiation. Plays a role in the establishment and maintenance of neuronal transmission and plasticity. This Danio rerio (Zebrafish) protein is E3 ubiquitin-protein ligase znrf1 (znrf1).